Here is a 137-residue protein sequence, read N- to C-terminus: Basic phospholipase A2 homolog Cax-K49 (137 aa).

An N-terminal signal peptide occupies residues 1 to 16 (MRTFWIVAMLLVGVEG). Intrachain disulfides connect C42-C131, C44-C60, C59-C111, C65-C137, C66-C104, C73-C97, and C91-C102. The important for membrane-damaging activities in eukaryotes and bacteria; heparin-binding stretch occupies residues 121-133 (KKYKIYPKFLCKK).

As to quaternary structure, homodimer; non-covalently linked. In terms of tissue distribution, expressed by the venom gland.

The protein localises to the secreted. Functionally, snake venom phospholipase A2 homolog that lacks enzymatic activity. Displays edema-inducing activities and may be myotoxic. A model of myotoxic mechanism has been proposed: an apo Lys49-PLA2 is activated by the entrance of a hydrophobic molecule (e.g. fatty acid) at the hydrophobic channel of the protein leading to a reorientation of a monomer. This reorientation causes a transition between 'inactive' to 'active' states, causing alignment of C-terminal and membrane-docking sites (MDoS) side-by-side and putting the membrane-disruption sites (MDiS) in the same plane, exposed to solvent and in a symmetric position for both monomers. The MDoS region stabilizes the toxin on membrane by the interaction of charged residues with phospholipid head groups. Subsequently, the MDiS region destabilizes the membrane with penetration of hydrophobic residues. This insertion causes a disorganization of the membrane, allowing an uncontrolled influx of ions (i.e. calcium and sodium), and eventually triggering irreversible intracellular alterations and cell death. This is Basic phospholipase A2 homolog Cax-K49 from Crotalus atrox (Western diamondback rattlesnake).